The following is a 300-amino-acid chain: NAD kinase (300 aa).

Residue Asp-80 is the Proton acceptor of the active site. Residues 80–81 (DG), 154–155 (ND), Arg-165, Arg-182, Asp-184, 195–200 (TAYALS), and Gln-253 each bind NAD(+).

This sequence belongs to the NAD kinase family. A divalent metal cation is required as a cofactor.

It localises to the cytoplasm. It carries out the reaction NAD(+) + ATP = ADP + NADP(+) + H(+). In terms of biological role, involved in the regulation of the intracellular balance of NAD and NADP, and is a key enzyme in the biosynthesis of NADP. Catalyzes specifically the phosphorylation on 2'-hydroxyl of the adenosine moiety of NAD to yield NADP. This is NAD kinase from Aromatoleum aromaticum (strain DSM 19018 / LMG 30748 / EbN1) (Azoarcus sp. (strain EbN1)).